Consider the following 129-residue polypeptide: UPF0225 protein XOO0258 (129 aa).

It belongs to the UPF0225 family.

This is UPF0225 protein XOO0258 from Xanthomonas oryzae pv. oryzae (strain MAFF 311018).